The primary structure comprises 4246 residues: Intermembrane lipid transfer protein vps13F (4246 aa).

The Chorein N-terminal domain occupies 2-113 (FESIVSNLLT…LLLQKKLKKL (112 aa)). Disordered stretches follow at residues 141–271 (IKEK…EDED), 401–420 (PKKS…PPPK), 591–759 (KAED…SILG), 914–944 (VSSS…EKKL), 964–1014 (KKSK…TNDE), 1217–1251 (QAQQ…IKSP), 1356–1379 (ISTH…DRVD), 1395–1436 (YNGV…KSKK), 1622–1683 (REKR…KSQS), 2101–2131 (LESL…QQQQ), 2211–2237 (HHSK…EKEK), 2471–2513 (QQQH…KSKQ), 2704–2756 (LSTS…QTTK), 3421–3449 (IDDD…TSPL), 3611–3652 (KTLN…NNQN), and 3794–3813 (NNNN…NIDE). Residues 168–201 (NASPVNSNNNNNNNSNLVSESNIPSSSSSSSSSL) show a composition bias toward low complexity. Residues 207-217 (NSSKDANKSDD) show a composition bias toward basic and acidic residues. Positions 218–271 (TDMDVDDDDEFQEATEGDYDNEEEQDDHDEEDDLSDDDDDDDDEEDDYEMEDED) are enriched in acidic residues. Composition is skewed to low complexity over residues 401–413 (PKKS…TTTP) and 597–658 (QQQQ…SNST). A compositionally biased stretch (basic and acidic residues) spans 659–668 (DSKDIMKSSG). The segment covering 669–680 (DKNVNNNNNMGD) has biased composition (low complexity). Residues 681-702 (NENKDNIDKKEENKNDDQDNKN) are compositionally biased toward basic and acidic residues. Composition is skewed to low complexity over residues 725–747 (SGGW…QQQQ) and 914–924 (VSSSPSPVSSP). Composition is skewed to basic and acidic residues over residues 925-944 (SRDK…EKKL) and 987-1001 (DKYS…REES). A compositionally biased stretch (low complexity) spans 1217-1241 (QAQQQAQQQQQSQHPSSNDDNSSSN). Positions 1400 to 1409 (SDDDNNDDEN) are enriched in acidic residues. Composition is skewed to basic and acidic residues over residues 1410-1431 (DKTT…DSLK) and 1622-1634 (REKR…DKDN). Positions 1644-1670 (QQSIPQKQQQQQQQQQQQQQQQQQQQQ) are enriched in low complexity. Composition is skewed to low complexity over residues 2471-2506 (QQQH…NNNN), 2705-2755 (STST…TQTT), 3430-3449 (DSGS…TSPL), 3613-3652 (LNNN…NNQN), and 3794-3809 (NNNN…NDFN).

It belongs to the VPS13 family.

The protein localises to the membrane. Mediates the transfer of lipids between membranes at organelle contact sites. The chain is Intermembrane lipid transfer protein vps13F (vps13F) from Dictyostelium discoideum (Social amoeba).